A 199-amino-acid polypeptide reads, in one-letter code: Recombination protein RecR (199 aa).

The C4-type zinc-finger motif lies at Cys-58 to Cys-73. The 96-residue stretch at Gly-81–Pro-176 folds into the Toprim domain.

This sequence belongs to the RecR family.

Functionally, may play a role in DNA repair. It seems to be involved in an RecBC-independent recombinational process of DNA repair. It may act with RecF and RecO. This is Recombination protein RecR from Cereibacter sphaeroides (strain ATCC 17025 / ATH 2.4.3) (Rhodobacter sphaeroides).